The following is a 412-amino-acid chain: Lysosomal phospholipase A and acyltransferase (412 aa).

Positions 1-33 (MGLHLRPYRVGLLPDGLLFLLLLLMLLADPALP) are cleaved as a signal peptide. D46 provides a ligand contact to substrate. A disulfide bridge connects residues C65 and C89. The N-linked (GlcNAc...) asparagine glycan is linked to N99. Catalysis depends on S198, which acts as the Acyl-ester intermediate. Position 198 (S198) interacts with Zn(2+). M199 provides a ligand contact to substrate. N273 and N289 each carry an N-linked (GlcNAc...) asparagine glycan. Zn(2+) contacts are provided by D340 and C355. Active-site charge relay system residues include D360 and H392. H392 contributes to the Zn(2+) binding site. N398 carries N-linked (GlcNAc...) asparagine glycosylation.

Belongs to the AB hydrolase superfamily. Lipase family. Post-translationally, N-glycosylated. N-glycosylation is important for maturation of the enzyme and normal subcellular location. As to expression, detected in blood plasma (at protein level). Ubiquitous. Highly expressed in heart, placenta, skeletal muscle, kidney and pancreas. Detected at lower levels in spleen, thymus, prostate, testis, ovary, small intestine, colon and peripheral blood leukocytes.

The protein resides in the lysosome. It is found in the secreted. It localises to the membrane. The enzyme catalyses a 1,2-diacyl-sn-glycero-3-phosphocholine + H2O = a 2-acyl-sn-glycero-3-phosphocholine + a fatty acid + H(+). It carries out the reaction 1-hexadecanoyl-2-(9Z-octadecenoyl)-sn-glycero-3-phosphocholine + H2O = 2-(9Z-octadecenoyl)-sn-glycero-3-phosphocholine + hexadecanoate + H(+). The catalysed reaction is 1-hexadecanoyl-2-glutaroyl-sn-glycero-3-phosphocholine + H2O = 2-glutaroyl-sn-glycero-3-phosphocholine + hexadecanoate + H(+). It catalyses the reaction 1-hexadecanoyl-2-nonadioyl-sn-glycero-3-phosphocholine + H2O = 2-nonadioyl-sn-glycero-3-phosphocholine + hexadecanoate + H(+). The enzyme catalyses 1-hexadecanoyl-2-(5-oxopentanoyl)-sn-glycero-3-phosphocholine + H2O = 2-(5-oxopentanoyl)-sn-glycero-3-phosphocholine + hexadecanoate + H(+). It carries out the reaction 1-hexadecanoyl-2-(9-oxononanoyl)-sn-glycero-3-phosphocholine + H2O = 2-(9-oxononanoyl)-sn-glycero-3-phosphocholine + hexadecanoate + H(+). The catalysed reaction is 1,2-dihexadecanoyl-sn-glycero-3-phosphocholine + H2O = 2-hexadecanoyl-sn-glycero-3-phosphocholine + hexadecanoate + H(+). It catalyses the reaction a 1,2-diacyl-sn-glycero-3-phosphocholine + H2O = a 1-acyl-sn-glycero-3-phosphocholine + a fatty acid + H(+). The enzyme catalyses 1,2-di-(9Z-octadecenoyl)-sn-glycero-3-phosphocholine + H2O = 1-(9Z-octadecenoyl)-sn-glycero-3-phosphocholine + (9Z)-octadecenoate + H(+). It carries out the reaction 1-hexadecanoyl-2-(9Z-octadecenoyl)-sn-glycero-3-phosphocholine + H2O = 1-hexadecanoyl-sn-glycero-3-phosphocholine + (9Z)-octadecenoate + H(+). The catalysed reaction is 1,2-dihexadecanoyl-sn-glycero-3-phosphocholine + H2O = 1-hexadecanoyl-sn-glycero-3-phosphocholine + hexadecanoate + H(+). It catalyses the reaction a 1-acyl-sn-glycero-3-phosphocholine + H2O = sn-glycerol 3-phosphocholine + a fatty acid + H(+). The enzyme catalyses 1-hexadecanoyl-sn-glycero-3-phosphocholine + H2O = sn-glycerol 3-phosphocholine + hexadecanoate + H(+). It carries out the reaction N-(acetyl)-sphing-4-enine + a 1,2-diacyl-sn-glycero-3-phosphoethanolamine = 1-O-acyl-N-(acetyl)-sphing-4-enine + a 2-acyl-sn-glycero-3-phosphoethanolamine. The catalysed reaction is 1-hexadecanoyl-2-(9Z-octadecenoyl)-sn-glycero-3-phosphoethanolamine + N-(acetyl)-sphing-4-enine = 2-(9Z-octadecenoyl)-sn-glycero-3-phosphoethanolamine + 1-hexadecanoyl-N-(acetyl)-sphing-4-enine. It catalyses the reaction 1-hexadecanoyl-2-(9Z,12Z-octadecadienoyl)-sn-glycero-3-phosphoethanolamine + N-(acetyl)-sphing-4-enine = 2-(9Z,12Z)-octadecadienoyl-sn-glycero-3-phosphoethanolamine + 1-hexadecanoyl-N-(acetyl)-sphing-4-enine. The enzyme catalyses 1-hexadecanoyl-2-(5Z,8Z,11Z,14Z-eicosatetraenoyl)-sn-glycero-3-phosphoethanolamine + N-(acetyl)-sphing-4-enine = 2-(5Z,8Z,11Z,14Z)-eicosatetraenoyl-sn-glycero-3-phosphoethanolamine + 1-hexadecanoyl-N-(acetyl)-sphing-4-enine. It carries out the reaction N-(acetyl)-sphing-4-enine + a 1,2-diacyl-sn-glycero-3-phosphoethanolamine = 1-O-acyl-N-(acetyl)-sphing-4-enine + a 1-acyl-sn-glycero-3-phosphoethanolamine. The catalysed reaction is 1-hexadecanoyl-2-(9Z-octadecenoyl)-sn-glycero-3-phosphoethanolamine + N-(acetyl)-sphing-4-enine = 1-(9Z-octadecenoyl)-N-(acetyl)-sphing-4-enine + 1-hexadecanoyl-sn-glycero-3-phosphoethanolamine. It catalyses the reaction 1-hexadecanoyl-2-(9Z,12Z-octadecadienoyl)-sn-glycero-3-phosphoethanolamine + N-(acetyl)-sphing-4-enine = 1-(9Z,12Z-octadecadienoyl)-N-acetylsphing-4-enine + 1-hexadecanoyl-sn-glycero-3-phosphoethanolamine. The enzyme catalyses 1-hexadecanoyl-2-(5Z,8Z,11Z,14Z-eicosatetraenoyl)-sn-glycero-3-phosphoethanolamine + N-(acetyl)-sphing-4-enine = 1-(5Z,8Z,11Z,14Z)-eicosatetraenoyl-N-(acetyl)-sphing-4-enine + 1-hexadecanoyl-sn-glycero-3-phosphoethanolamine. It carries out the reaction N-(acetyl)-sphing-4-enine + a 1,2-diacyl-sn-glycero-3-phosphocholine = 1-O-acyl-N-(acetyl)-sphing-4-enine + a 1-acyl-sn-glycero-3-phosphocholine. The catalysed reaction is 1-hexadecanoyl-2-(9Z-octadecenoyl)-sn-glycero-3-phosphocholine + N-(acetyl)-sphing-4-enine = 1-(9Z-octadecenoyl)-N-(acetyl)-sphing-4-enine + 1-hexadecanoyl-sn-glycero-3-phosphocholine. It catalyses the reaction 1-hexadecanoyl-2-(9Z,12Z-octadecadienoyl)-sn-glycero-3-phosphocholine + N-(acetyl)-sphing-4-enine = 1-(9Z,12Z-octadecadienoyl)-N-acetylsphing-4-enine + 1-hexadecanoyl-sn-glycero-3-phosphocholine. The enzyme catalyses 1-hexadecanoyl-2-(5Z,8Z,11Z,14Z-eicosatetraenoyl)-sn-glycero-3-phosphocholine + N-(acetyl)-sphing-4-enine = 1-(5Z,8Z,11Z,14Z)-eicosatetraenoyl-N-(acetyl)-sphing-4-enine + 1-hexadecanoyl-sn-glycero-3-phosphocholine. It carries out the reaction 1-hexadecanoyl-2-(4Z,7Z,10Z,13Z,16Z,19Z-docosahexaenoyl)-sn-glycero-3-phosphocholine + N-(acetyl)-sphing-4-enine = 1-(4Z,7Z,10Z,13Z,16Z,19Z-docosahexaenoyl)-N-(acetyl)-sphing-4-enine + 1-hexadecanoyl-sn-glycero-3-phosphocholine. The catalysed reaction is 1-octadecanoyl-2-(9Z-octadecenoyl)-sn-glycero-3-phosphocholine + N-(acetyl)-sphing-4-enine = 1-(9Z-octadecenoyl)-N-(acetyl)-sphing-4-enine + 1-octadecanoyl-sn-glycero-3-phosphocholine. It catalyses the reaction 1-octadecanoyl-2-(9Z,12Z)-octadecadienoyl-sn-glycero-3-phosphocholine + N-(acetyl)-sphing-4-enine = 1-(9Z,12Z-octadecadienoyl)-N-acetylsphing-4-enine + 1-octadecanoyl-sn-glycero-3-phosphocholine. The enzyme catalyses 1-octadecanoyl-2-(5Z,8Z,11Z,14Z-eicosatetraenoyl)-sn-glycero-3-phosphocholine + N-(acetyl)-sphing-4-enine = 1-(5Z,8Z,11Z,14Z)-eicosatetraenoyl-N-(acetyl)-sphing-4-enine + 1-octadecanoyl-sn-glycero-3-phosphocholine. It carries out the reaction 1-(9Z-octadecenoyl)-2-hexadecanoyl-sn-glycero-3-phosphocholine + N-(acetyl)-sphing-4-enine = 1-hexadecanoyl-N-(acetyl)-sphing-4-enine + 1-(9Z-octadecenoyl)-sn-glycero-3-phosphocholine. The catalysed reaction is 1-(9Z)-octadecenoyl-2-octadecanoyl-sn-glycero-3-phosphocholine + N-(acetyl)-sphing-4-enine = 1-octadecanoyl-N-(acetyl)-sphing-4-enine + 1-(9Z-octadecenoyl)-sn-glycero-3-phosphocholine. It catalyses the reaction 1,2-di-(9Z-octadecenoyl)-sn-glycero-3-phosphocholine + N-(acetyl)-sphing-4-enine = 1-(9Z-octadecenoyl)-N-(acetyl)-sphing-4-enine + 1-(9Z-octadecenoyl)-sn-glycero-3-phosphocholine. The enzyme catalyses N-(acetyl)-sphing-4-enine + a 1,2-diacyl-sn-glycero-3-phosphocholine = 1-O-acyl-N-(acetyl)-sphing-4-enine + a 2-acyl-sn-glycero-3-phosphocholine. It carries out the reaction 1-hexadecanoyl-2-(9Z-octadecenoyl)-sn-glycero-3-phosphocholine + N-(acetyl)-sphing-4-enine = 1-hexadecanoyl-N-(acetyl)-sphing-4-enine + 2-(9Z-octadecenoyl)-sn-glycero-3-phosphocholine. The catalysed reaction is 1-hexadecanoyl-2-(9Z,12Z-octadecadienoyl)-sn-glycero-3-phosphocholine + N-(acetyl)-sphing-4-enine = 2-(9Z,12Z-octadecadienoyl)-sn-glycero-3-phosphocholine + 1-hexadecanoyl-N-(acetyl)-sphing-4-enine. It catalyses the reaction 1-hexadecanoyl-2-(5Z,8Z,11Z,14Z-eicosatetraenoyl)-sn-glycero-3-phosphocholine + N-(acetyl)-sphing-4-enine = 1-hexadecanoyl-N-(acetyl)-sphing-4-enine + 2-(5Z,8Z,11Z,14Z)-eicosatetraenoyl-sn-glycero-3-phosphocholine. The enzyme catalyses 1-hexadecanoyl-2-(4Z,7Z,10Z,13Z,16Z,19Z-docosahexaenoyl)-sn-glycero-3-phosphocholine + N-(acetyl)-sphing-4-enine = 2-(4Z,7Z,10Z,13Z,16Z,19Z-docosahexaenoyl)-sn-glycero-3-phosphocholine + 1-hexadecanoyl-N-(acetyl)-sphing-4-enine. It carries out the reaction 1-hexadecanoyl-2-nonadioyl-sn-glycero-3-phosphocholine + N-(acetyl)-sphing-4-enine = 2-nonadioyl-sn-glycero-3-phosphocholine + 1-hexadecanoyl-N-(acetyl)-sphing-4-enine. The catalysed reaction is 1-octadecanoyl-2-(9Z-octadecenoyl)-sn-glycero-3-phosphocholine + N-(acetyl)-sphing-4-enine = 1-octadecanoyl-N-(acetyl)-sphing-4-enine + 2-(9Z-octadecenoyl)-sn-glycero-3-phosphocholine. It catalyses the reaction 1-octadecanoyl-2-(5Z,8Z,11Z,14Z-eicosatetraenoyl)-sn-glycero-3-phosphocholine + N-(acetyl)-sphing-4-enine = 1-octadecanoyl-N-(acetyl)-sphing-4-enine + 2-(5Z,8Z,11Z,14Z)-eicosatetraenoyl-sn-glycero-3-phosphocholine. The enzyme catalyses 1-(9Z-octadecenoyl)-2-hexadecanoyl-sn-glycero-3-phosphocholine + N-(acetyl)-sphing-4-enine = 1-(9Z-octadecenoyl)-N-(acetyl)-sphing-4-enine + 2-hexadecanoyl-sn-glycero-3-phosphocholine. It carries out the reaction 1-(9Z)-octadecenoyl-2-octadecanoyl-sn-glycero-3-phosphocholine + N-(acetyl)-sphing-4-enine = 2-octadecanoyl-sn-glycero-3-phosphocholine + 1-(9Z-octadecenoyl)-N-(acetyl)-sphing-4-enine. The catalysed reaction is a 1,2-diacyl-sn-glycero-3-phospho-L-serine + N-(acetyl)-sphing-4-enine = a 2-acyl-sn-glycero-3-phospho-L-serine + 1-O-acyl-N-(acetyl)-sphing-4-enine. It catalyses the reaction 1-octadecanoyl-2-(9Z-octadecenoyl)-sn-glycero-3-phospho-L-serine + N-(acetyl)-sphing-4-enine = 2-(9Z-octadecenoyl)-sn-glycero-3-phospho-L-serine + 1-octadecanoyl-N-(acetyl)-sphing-4-enine. The enzyme catalyses a 1,2-diacyl-sn-glycero-3-phospho-L-serine + N-(acetyl)-sphing-4-enine = 1-O-acyl-N-(acetyl)-sphing-4-enine + a 1-acyl-sn-glycero-3-phospho-L-serine. It carries out the reaction 1-octadecanoyl-2-(9Z-octadecenoyl)-sn-glycero-3-phospho-L-serine + N-(acetyl)-sphing-4-enine = 1-octadecanoyl-sn-glycero-3-phosphoserine + 1-(9Z-octadecenoyl)-N-(acetyl)-sphing-4-enine. The catalysed reaction is a 1,2-diacyl-sn-glycero-3-phospho-(1'-sn-glycerol) + N-(acetyl)-sphing-4-enine = 2-acyl-sn-glycero-3-phospho-(1'-sn-glycerol) + 1-O-acyl-N-(acetyl)-sphing-4-enine. It catalyses the reaction 1-octadecanoyl-2-(9Z-octadecenoyl)-sn-glycero-3-phospho-(1'-sn-glycerol) + N-(acetyl)-sphing-4-enine = 2-(9Z-octadecenoyl)-sn-glycero-3-phospho-(1'-sn-glycerol) + 1-octadecanoyl-N-(acetyl)-sphing-4-enine. The enzyme catalyses a 1,2-diacyl-sn-glycero-3-phospho-(1'-sn-glycerol) + N-(acetyl)-sphing-4-enine = 1-O-acyl-N-(acetyl)-sphing-4-enine + 1-acyl-sn-glycero-3-phospho-(1'-sn-glycerol). It carries out the reaction 1-octadecanoyl-2-(9Z-octadecenoyl)-sn-glycero-3-phospho-(1'-sn-glycerol) + N-(acetyl)-sphing-4-enine = 1-octadecanoyl-sn-glycero-3-phospho-(1'-sn-glycerol) + 1-(9Z-octadecenoyl)-N-(acetyl)-sphing-4-enine. The catalysed reaction is an N-acylethanolamine + a 1,2-diacyl-sn-glycero-3-phosphocholine = 2-(acylamino)ethyl fatty acid + a 2-acyl-sn-glycero-3-phosphocholine. It catalyses the reaction an N-acylethanolamine + a 1,2-diacyl-sn-glycero-3-phosphocholine = 2-(acylamino)ethyl fatty acid + a 1-acyl-sn-glycero-3-phosphocholine. The enzyme catalyses N-(5Z,8Z,11Z,14Z-eicosatetraenoyl)-ethanolamine + 1,2-di-(9Z-octadecenoyl)-sn-glycero-3-phosphocholine = 2-[(5Z,8Z,11Z,14Z)-eicosatetraenoylamino]ethyl (9Z)-octadecenoate + (9Z-octadecenoyl)-sn-glycero-3-phosphocholine. It carries out the reaction N-(9Z-octadecenoyl) ethanolamine + 1,2-di-(9Z-octadecenoyl)-sn-glycero-3-phosphocholine = 2-[(9Z)-octadecenoylamino]ethyl (9Z)-octadecenoate + (9Z-octadecenoyl)-sn-glycero-3-phosphocholine. The catalysed reaction is a 3-acyl-sn-glycerol + a 1,2-diacyl-sn-glycero-3-phosphocholine = a 1,3-diacylglycerol + a 1-acyl-sn-glycero-3-phosphocholine. It catalyses the reaction a 3-acyl-sn-glycerol + a 1,2-diacyl-sn-glycero-3-phosphocholine = a 1,3-diacylglycerol + a 2-acyl-sn-glycero-3-phosphocholine. The enzyme catalyses 3-(9Z-octadecenoyl)-sn-glycerol + 1,2-di-(9Z-octadecenoyl)-sn-glycero-3-phosphocholine = 1,3-di-(9Z-octadecenoyl)-glycerol + (9Z-octadecenoyl)-sn-glycero-3-phosphocholine. It carries out the reaction 3-hexadecanoyl-sn-glycerol + 1,2-di-(9Z-octadecenoyl)-sn-glycero-3-phosphocholine = 1-(9Z)-octadecenoyl-3-hexadecanoyl-sn-glycerol + (9Z-octadecenoyl)-sn-glycero-3-phosphocholine. The catalysed reaction is a 1-acyl-sn-glycerol + a 1,2-diacyl-sn-glycero-3-phosphocholine = a 1,3-diacylglycerol + a 2-acyl-sn-glycero-3-phosphocholine. It catalyses the reaction a 1-acyl-sn-glycerol + a 1,2-diacyl-sn-glycero-3-phosphocholine = a 1,3-diacylglycerol + a 1-acyl-sn-glycero-3-phosphocholine. The enzyme catalyses 1-(9Z-octadecenoyl)-sn-glycerol + 1,2-di-(9Z-octadecenoyl)-sn-glycero-3-phosphocholine = 1,3-di-(9Z-octadecenoyl)-glycerol + (9Z-octadecenoyl)-sn-glycero-3-phosphocholine. It carries out the reaction 1-hexadecanoyl-sn-glycerol + 1,2-di-(9Z-octadecenoyl)-sn-glycero-3-phosphocholine = 1-hexadecanoyl-3-(9Z)-octadecenoyl-sn-glycerol + (9Z-octadecenoyl)-sn-glycero-3-phosphocholine. The catalysed reaction is a 2-acylglycerol + a 1,2-diacyl-sn-glycero-3-phosphocholine = a 1,2-diacylglycerol + a 2-acyl-sn-glycero-3-phosphocholine. It catalyses the reaction a 2-acylglycerol + a 1,2-diacyl-sn-glycero-3-phosphocholine = a 1,2-diacylglycerol + a 1-acyl-sn-glycero-3-phosphocholine. The enzyme catalyses 2-hexadecanoylglycerol + 1,2-di-(9Z-octadecenoyl)-sn-glycero-3-phosphocholine = 1-(9Z)-octadecenoyl-2-hexadecanoylglycerol + (9Z-octadecenoyl)-sn-glycero-3-phosphocholine. It carries out the reaction 1-O-alkylglycerol + a 1,2-diacyl-sn-glycero-3-phosphocholine = 1-O-alkyl-3-acylglycerol + a 1-acyl-sn-glycero-3-phosphocholine. The catalysed reaction is 1-O-alkylglycerol + a 1,2-diacyl-sn-glycero-3-phosphocholine = 1-O-alkyl-3-acylglycerol + a 2-acyl-sn-glycero-3-phosphocholine. It catalyses the reaction 1-O-hexadecylglycerol + 1,2-di-(9Z-octadecenoyl)-sn-glycero-3-phosphocholine = 1-O-hexadecyl-3-(9Z)-octadecenoylglycerol + (9Z-octadecenoyl)-sn-glycero-3-phosphocholine. The enzyme catalyses 1-O-alkyl-2-acyl-sn-glycerol + a 1,2-diacyl-sn-glycero-3-phosphocholine = 1-O-alkyl-2,3-diacyl-sn-glycerol + a 2-acyl-sn-glycero-3-phosphocholine. It carries out the reaction 1-O-alkyl-2-acyl-sn-glycerol + a 1,2-diacyl-sn-glycero-3-phosphocholine = 1-O-alkyl-2,3-diacyl-sn-glycerol + a 1-acyl-sn-glycero-3-phosphocholine. The catalysed reaction is 1-O-hexadecyl-2-acetyl-sn-glycerol + 1,2-di-(9Z-octadecenoyl)-sn-glycero-3-phosphocholine = 1-O-hexadecyl-2-acetyl-3-(9Z)-octadecenoyl-sn-glycerol + (9Z-octadecenoyl)-sn-glycero-3-phosphocholine. It catalyses the reaction 1-O-hexadecyl-2-O-methyl-sn-glycerol + 1,2-di-(9Z-octadecenoyl)-sn-glycero-3-phosphocholine = 1-O-hexadecyl-2-O-methyl-3-(9Z)-octadecenoyl-sn-glycerol + (9Z-octadecenoyl)-sn-glycero-3-phosphocholine. The enzyme catalyses a 1,2-diacyl-sn-glycero-3-phosphoethanolamine + H2O = a 1-acyl-sn-glycero-3-phosphoethanolamine + a fatty acid + H(+). It carries out the reaction 1-acyl-2-(5Z,8Z,11Z,14Z)-eicosatetraenoyl-sn-glycero-3-phosphoethanolamine + H2O = a 1-acyl-sn-glycero-3-phosphoethanolamine + (5Z,8Z,11Z,14Z)-eicosatetraenoate + H(+). The catalysed reaction is a 1,2-diacyl-sn-glycero-3-phospho-(1'-sn-glycerol) + H2O = 1-acyl-sn-glycero-3-phospho-(1'-sn-glycerol) + a fatty acid + H(+). It catalyses the reaction 1-hexadecanoyl-2-(9Z-octadecenoyl)-sn-glycero-3-phospho-(1'-sn-glycerol) + H2O = 1-hexadecanoyl-sn-glycero-3-phospho-(1'-sn-glycerol) + (9Z)-octadecenoate + H(+). The enzyme catalyses a 1,2-diacyl-sn-glycero-3-phospho-(1'-sn-glycerol) + H2O = 2-acyl-sn-glycero-3-phospho-(1'-sn-glycerol) + a fatty acid + H(+). It carries out the reaction 1-hexadecanoyl-2-(9Z-octadecenoyl)-sn-glycero-3-phospho-(1'-sn-glycerol) + H2O = 2-(9Z-octadecenoyl)-sn-glycero-3-phospho-(1'-sn-glycerol) + hexadecanoate + H(+). Inhibited by zinc ions at neutral pH. Zinc ions in plasma may keep the enzyme from hydrolyzing inappropriate substrates. Has dual calcium-independent phospholipase and O-acyltransferase activities with a potential role in glycerophospholipid homeostasis and remodeling of acyl groups of lipophilic alcohols present in acidic cellular compartments. Catalyzes hydrolysis of the ester bond of the fatty acyl group attached at sn-1 or sn-2 position of phospholipids (phospholipase A1 or A2 activity) and transfer it to the hydroxyl group at the first carbon of lipophilic alcohols (O-acyltransferase activity). Among preferred fatty acyl donors are phosphatidylcholines, phosphatidylethanolamines, phosphatidylglycerols and phosphatidylserines. Favors sn-2 over sn-1 deacylation of unsaturated fatty acyl groups of phosphatidylcholines, phosphatidylethanolamines, and phosphatidylglycerols. Among preferred fatty acyl acceptors are natural lipophilic alcohols including short-chain ceramide N-acetyl-sphingosine (C2 ceramide), alkylacylglycerols, monoacylglycerols, and acylethanolamides such as anandamide and oleoylethanolamide. Selectively hydrolyzes the sn-1 fatty acyl group of truncated oxidized phospholipids and may play a role in detoxification of reactive oxidized phospholipids during oxidative stress. Required for normal phospholipid degradation in alveolar macrophages with potential implications in the clearance of pulmonary surfactant, which is mainly composed of dipalmitoylphosphatidylcholine (1,2-dihexadecanoyl-sn-glycero-3-phosphocholine). Involved in the first step of bis(monoacylglycero)phosphate (BMP) de novo synthesis from phosphatidylglycerol (1,2-diacyl-sn-glycero-3-phospho-(1'-sn-glycerol), PG). BMP is an important player in cargo sorting and degradation, regulation of cellular cholesterol levels and intercellular communication. At neutral pH, hydrolyzes the sn-1 fatty acyl group of the lysophosphatidylcholines. This chain is Lysosomal phospholipase A and acyltransferase, found in Homo sapiens (Human).